The chain runs to 367 residues: Aflatoxin B1 aldehyde reductase member 2 (367 aa).

A compositionally biased stretch (low complexity) spans 1–31 (MLRAASRAVGRAAVRSAQRSGTSVGRPLAMS). The disordered stretch occupies residues 1-45 (MLRAASRAVGRAAVRSAQRSGTSVGRPLAMSRPPPPRAASGAPLR). The N-terminal 46 residues, 1 to 46 (MLRAASRAVGRAAVRSAQRSGTSVGRPLAMSRPPPPRAASGAPLRP), are a transit peptide targeting the mitochondrion. The residue at position 40 (Ser-40) is a Phosphoserine. Thr-48 carries the post-translational modification Phosphothreonine. Asp-80 lines the NADP(+) pocket. Residue Tyr-85 is the Proton donor of the active site. At Lys-136 the chain carries N6-acetyllysine. His-149 lines the substrate pocket. NADP(+) contacts are provided by residues 179–180 (SN), Gln-205, 234–244 (NPLAGGLLTGK), and Arg-258. Lys-244 is modified (N6-succinyllysine). The substrate site is built by Tyr-268 and Arg-271. NADP(+) is bound at residue 326–334 (SSLEQLEQN). Arg-367 is a binding site for substrate.

Belongs to the aldo/keto reductase family. Aldo/keto reductase 2 subfamily. As to quaternary structure, homodimer. As to expression, expressed in liver, kidney, testis and brain with low levels in skeletal muscle, spleen, heart and lung.

It localises to the mitochondrion. The protein localises to the golgi apparatus. Its subcellular location is the cytoplasm. It catalyses the reaction 4-hydroxybutanoate + NADP(+) = succinate semialdehyde + NADPH + H(+). Inhibited by citrate, succinate and tartrate. Functionally, catalyzes the NADPH-dependent reduction of succinic semialdehyde to gamma-hydroxybutyrate. May have an important role in producing the neuromodulator gamma-hydroxybutyrate (GHB). Has broad substrate specificity. Can reduce the dialdehyde protein-binding form of aflatoxin B1 (AFB1) to the non-binding AFB1 dialcohol. May be involved in protection of liver against the toxic and carcinogenic effects of AFB1, a potent hepatocarcinogen. The chain is Aflatoxin B1 aldehyde reductase member 2 from Mus musculus (Mouse).